The following is a 454-amino-acid chain: Metalloprotease MTH_856 (454 aa).

The interval 92-115 (QVGSGAPSVDKTMVRSSRPPSDVP) is disordered.

The protein belongs to the peptidase U62 family.

Functionally, probable metalloprotease. The sequence is that of Metalloprotease MTH_856 from Methanothermobacter thermautotrophicus (strain ATCC 29096 / DSM 1053 / JCM 10044 / NBRC 100330 / Delta H) (Methanobacterium thermoautotrophicum).